Reading from the N-terminus, the 412-residue chain is uncharacterized protein (412 aa).

A compositionally biased stretch (polar residues) spans methionine 1 to proline 17. 3 disordered regions span residues methionine 1–glycine 20, glutamate 223–threonine 243, and glutamine 310–alanine 412. A compositionally biased stretch (polar residues) spans lysine 340 to asparagine 355. The span at glycine 361–glycine 379 shows a compositional bias: gly residues. Over residues serine 390–asparagine 402 the composition is skewed to low complexity. The span at alanine 403–alanine 412 shows a compositional bias: polar residues.

This is an uncharacterized protein from Schizosaccharomyces pombe (strain 972 / ATCC 24843) (Fission yeast).